The sequence spans 570 residues: Keratin, type I cytoskeletal 10 (570 aa).

The span at 1–16 shows a compositional bias: low complexity; the sequence is MSVLYSSSSKQFSSSR. The interval 1–29 is disordered; the sequence is MSVLYSSSSKQFSSSRSGGGGGGGSVRVS. The interval 1-143 is head; the sequence is MSVLYSSSSK…GDGGSLLSGN (143 aa). A phosphoserine mark is found at Ser15 and Ser17. An Asymmetric dimethylarginine; alternate modification is found at Arg32. Position 32 is an omega-N-methylarginine; alternate (Arg32). 4 positions are modified to phosphoserine: Ser34, Ser45, Ser48, and Ser168. Positions 144-179 are coil 1A; the sequence is GRVTMQNLNDRLASYMDKVRALEESNYELEGKIKEW. The 315-residue stretch at 144–458 folds into the IF rod domain; that stretch reads GRVTMQNLND…SLLEGEGSSS (315 aa). Residues 180-200 are linker 1; that stretch reads YEKHGNSSQREPRDYSKYYKT. Residues 201 to 292 are coil 1B; it reads IEDLKGQILT…KNHEEEMRDL (92 aa). The segment at 293-315 is linker 12; sequence QNVSTGDVNVEMNAAPGVDLTQL. Residues 316–454 form a coil 2 region; that stretch reads LNNMRNQYEQ…QTYRSLLEGE (139 aa). A disordered region spans residues 451 to 570; the sequence is LEGEGSSSGG…GDQSSKGPRY (120 aa). The tract at residues 455–570 is tail; that stretch reads GSSSGGGGGR…GDQSSKGPRY (116 aa). The span at 456–562 shows a compositional bias: gly residues; the sequence is SSSGGGGGRR…GGFKSSGGGD (107 aa).

The protein belongs to the intermediate filament family. In terms of assembly, (Microbial infection) Interacts (via C-terminal tail domain) with the S.aureus clumping factor, clfB; this interaction probably mediates S.aureus attachment to the highly keratinized squamous epithelial cells from the nasal cavity. As to quaternary structure, heterotetramer of two type I and two type II keratins. Heterodimer with KRT1. Two heterodimers of KRT1 and KRT10 form a heterotetramer. The KRT10 subunit in the heterotetramer is probably disulfide-linked. Interacts with PLEC isoform 1C, when in a heterodimer with KRT1. (Microbial infection) Interacts (via the C-terminal tail domain) with S.pneumoniae serine-rich repeat protein PsrP; this interaction probably mediates S.pneumoniae adherence to lung tissue and subsequent pathogenesis. In terms of tissue distribution, expressed in the suprabasal layers of the epidermis throughout the entire sole (at protein level). Expressed in the infundibular regions of the ear, the interscale regions of the tail, and the interfollicular epidermis of the back. Expressed in lung tissue from young mice (at protein level).

It is found in the secreted. It localises to the extracellular space. Its subcellular location is the cell surface. The protein resides in the cytoplasm. Functionally, plays a role in the establishment of the epidermal barrier on plantar skin. Involved in the maintenance of cell layer development and keratin filament bundles in suprabasal cells of the epithelium. (Microbial infection) Acts as a mediator of S.aureus adherence to desquamated nasal epithelial cells via clfB, and hence may play a role in nasal colonization. In terms of biological role, (Microbial infection) Binds S.pneumoniae PsrP, mediating adherence of the bacteria to lung cell lines. The chain is Keratin, type I cytoskeletal 10 (Krt10) from Mus musculus (Mouse).